Consider the following 258-residue polypeptide: uncharacterized protein (258 aa).

The next 5 membrane-spanning stretches (helical) occupy residues 14–34 (LAFPWLSAVILNSFLLALAAI), 53–73 (VIIWAALGWRGYLVVLAYFFV), 110–130 (AALCALAIAFGPEPWQLWLAL), 185–205 (GLALAVLGYGVGLISFGGIIF), and 238–258 (GINTFLGAAIAIGIEATAQLI).

The protein belongs to the TMEM19 family.

It localises to the cell membrane. This is an uncharacterized protein from Synechocystis sp. (strain ATCC 27184 / PCC 6803 / Kazusa).